The primary structure comprises 447 residues: N-succinylarginine dihydrolase (447 aa).

Substrate contacts are provided by residues Ala-19–Ser-28, Asn-110, and His-137–Arg-138. Residue Glu-174 is part of the active site. Substrate is bound at residue Arg-213. His-249 is a catalytic residue. Substrate is bound by residues Asp-251 and Asn-364. The active-site Nucleophile is the Cys-370.

Belongs to the succinylarginine dihydrolase family. As to quaternary structure, homodimer.

The catalysed reaction is N(2)-succinyl-L-arginine + 2 H2O + 2 H(+) = N(2)-succinyl-L-ornithine + 2 NH4(+) + CO2. It functions in the pathway amino-acid degradation; L-arginine degradation via AST pathway; L-glutamate and succinate from L-arginine: step 2/5. In terms of biological role, catalyzes the hydrolysis of N(2)-succinylarginine into N(2)-succinylornithine, ammonia and CO(2). In Yersinia pestis bv. Antiqua (strain Antiqua), this protein is N-succinylarginine dihydrolase.